Here is a 348-residue protein sequence, read N- to C-terminus: 4-hydroxy-2-oxovalerate aldolase 2 (348 aa).

The region spanning Leu5–Leu256 is the Pyruvate carboxyltransferase domain. A substrate-binding site is contributed by Arg13–Asp14. Asp14 is a binding site for Mn(2+). His17 acts as the Proton acceptor in catalysis. Residues Ser168 and His195 each coordinate substrate. Mn(2+)-binding residues include His195 and His197.

Belongs to the 4-hydroxy-2-oxovalerate aldolase family.

It catalyses the reaction (S)-4-hydroxy-2-oxopentanoate = acetaldehyde + pyruvate. The sequence is that of 4-hydroxy-2-oxovalerate aldolase 2 from Salinispora arenicola (strain CNS-205).